The sequence spans 428 residues: Serine--tRNA ligase (428 aa).

237 to 239 is an L-serine binding site; the sequence is TAE. Residue 268–270 coordinates ATP; sequence RSE. Residue Glu291 participates in L-serine binding. 355–358 provides a ligand contact to ATP; the sequence is EISS. Position 390 (Ser390) interacts with L-serine.

It belongs to the class-II aminoacyl-tRNA synthetase family. Type-1 seryl-tRNA synthetase subfamily. Homodimer. The tRNA molecule binds across the dimer.

The protein localises to the cytoplasm. The catalysed reaction is tRNA(Ser) + L-serine + ATP = L-seryl-tRNA(Ser) + AMP + diphosphate + H(+). It carries out the reaction tRNA(Sec) + L-serine + ATP = L-seryl-tRNA(Sec) + AMP + diphosphate + H(+). Its pathway is aminoacyl-tRNA biosynthesis; selenocysteinyl-tRNA(Sec) biosynthesis; L-seryl-tRNA(Sec) from L-serine and tRNA(Sec): step 1/1. In terms of biological role, catalyzes the attachment of serine to tRNA(Ser). Is also able to aminoacylate tRNA(Sec) with serine, to form the misacylated tRNA L-seryl-tRNA(Sec), which will be further converted into selenocysteinyl-tRNA(Sec). This chain is Serine--tRNA ligase, found in Hydrogenovibrio crunogenus (strain DSM 25203 / XCL-2) (Thiomicrospira crunogena).